The primary structure comprises 369 residues: 3-dehydroquinate synthase (369 aa).

NAD(+) contacts are provided by residues 75–80 (DGEEHK), 109–113 (GVIGD), 133–134 (TT), Lys-146, Lys-155, and 173–176 (TLKT). The Zn(2+) site is built by Glu-188, His-251, and His-268.

This sequence belongs to the sugar phosphate cyclases superfamily. Dehydroquinate synthase family. The cofactor is Co(2+). It depends on Zn(2+) as a cofactor. NAD(+) serves as cofactor.

The protein resides in the cytoplasm. The catalysed reaction is 7-phospho-2-dehydro-3-deoxy-D-arabino-heptonate = 3-dehydroquinate + phosphate. It participates in metabolic intermediate biosynthesis; chorismate biosynthesis; chorismate from D-erythrose 4-phosphate and phosphoenolpyruvate: step 2/7. Catalyzes the conversion of 3-deoxy-D-arabino-heptulosonate 7-phosphate (DAHP) to dehydroquinate (DHQ). In Legionella pneumophila (strain Corby), this protein is 3-dehydroquinate synthase.